Reading from the N-terminus, the 72-residue chain is Translation initiation factor IF-1 (72 aa).

In terms of domain architecture, S1-like spans 1–72 (MTKEDSFEMH…SKGRIIFRSR (72 aa)).

Belongs to the IF-1 family. Component of the 30S ribosomal translation pre-initiation complex which assembles on the 30S ribosome in the order IF-2 and IF-3, IF-1 and N-formylmethionyl-tRNA(fMet); mRNA recruitment can occur at any time during PIC assembly.

It is found in the cytoplasm. One of the essential components for the initiation of protein synthesis. Stabilizes the binding of IF-2 and IF-3 on the 30S subunit to which N-formylmethionyl-tRNA(fMet) subsequently binds. Helps modulate mRNA selection, yielding the 30S pre-initiation complex (PIC). Upon addition of the 50S ribosomal subunit IF-1, IF-2 and IF-3 are released leaving the mature 70S translation initiation complex. The polypeptide is Translation initiation factor IF-1 (Blochmanniella pennsylvanica (strain BPEN)).